The sequence spans 2959 residues: MNIAYKYIGYIYTTIMSNKITVNKDYTQATLNPSNTVDIGPRISNYQADYLFIHFDEIMRREIDRNPDIIYDNNFQEFMQYVSEYKRILVESRKHKLVPGLFGSTSEQFSCSTGSHIFTPEDRDKINEAIILGQLNPRKYLTENDLSLIGFNNHYIQECGNRLSHNFFEHVALPTQRVWNNYLLSKSIEPNASITINTYQKLHEDFQKSMADINDQVINGDYATRYNIIEQKISDTVNFLENLISASNTEENIINNTLDLSNYYERLVFGEPNVDPSLVIPKDTIDLVERDALKKQIKASINRYSKMSTSSVLASTYNVASEVQNIRNVGSLATNLLDTLNNANNIINPPQELYDLMSTKLYIDDNGNQVAKYLNDTASNKLIQNEIDKQNSYLEFIRTNETITSRGKLIPVNSANDPLSRLNRYSHKYTYVPIAQGGNNSKSTKYQFNKKSTQNITISQSGGRDIDVEKLLDSSKQASNVINQTISDIDQSRNFYTKQTELYFNNNNFVDIDNLNQRNQLLIEMINVLGIYNFLIGERSNNRSVFLSELDKRTKSFKQILDNYIKSVNSRIPPITDDKTIGQILANGFLSVSEIQNLITTSGLNINVEQIPEDAILNNATTAKLISTLIDKYSLSNMKSVVSDLRKILNVAPLGITYQTNPEDSYKQLSSFYSILKSLNTSLLSEYQNLSTNTQNFQSIRDLTGKILESNISTFNTFTKQLIESVRNFGSEIDGIQSIRKQILQSKRRLADIEFFTRESTYNLSPKSQSVSQQDADLLQSKNLGVAVMNHDLSSNEITDFYQNYVTNYLDKIAGASVNVVKHYSYDKDIKTINDNKNMFNNTYDNYNTLLETLQTSANTTRTLRNIVSNNTTINSDASFNSLARRIWDVINYFNGTFMPLNSDIMNKINIPGDLSEYLSKYLIVNPEIINNYLANSVNFDSTGKIQPTDKLSRKSQIDLLVKTIPFYIKGAQLSDTYTTSQYSPGIPNQTFIGEVQDRLNQLIANETDDNAYNLYNYVTTSRNIILPEARIVGEISDQLEDVYNSRFSTPTNRSEFQNSILSQLDTIIIGIYRQFYETLMYLYQLANNYILINNPHNPMYSSIQKDQHNLAALQQDIRIMNLSNNFAVNGRDIPDIVPKSTGGPINCRNPLINKRFNKTIHRRINCLGLMIIDYNNNIGSDLSTITQQYNTFYQNSVPLLNLLRDQTISGEQINAILDVNINALNLFVANPKLLPNSFTYGTRIQESNMITPNIINTFDINNLDPNKSVFNDYETTLSAYIPSFVNDIIDINGQYIEYTNVRYHLISVGSISLPNVKIQAGDTISIRNIDDIQMLIDIGNNVVDFTNRLYKSSKQISNLVVETVDTWGSSVLTDSDEFNLRRSKKFRLLQTLNTLRHIEDSIRSNRNITRLNQFLLEKEDPTNAVLIMSAISIVNNINLTDRLFNENVDKIWIFARKLVNVWYTIFSQILSLLVVNGVVPATTNLIRSLDPFMRRSNLFNIDNVIDNTPNTNNYVDAINNEFNTKISQINNDKNKYPINLDPSKSTGIPDQDKYIIDNPNIISFNHYYNNISDKSSRVYILMAIMNDEGYRNINKYLESISDHTEYLINLVDFSENYLDNNFIQKKLDDLPIIDPKITNLVNAQTNFKQAFMLELQLELQALGLDQLYGPIESLVNNGTNTIQTGLSNPKTITPVAILDPNRSIEIDNQVSLDIISSPRIFDPSEYLYLANEFITSRQSGRFFRLYLSDIYRVIFRSITNELDRTMNSINQDISATNVADLEEFRETYLNYITNKKFSTTLYLNPTDLSDSITAVPNDSNSPNIKAVLLLPNDYQTNSDRINTINDIFRTVSETIKPNIYELFETEISNYNKLIQADYTVRKLITDYKSDVQNKLDKLRNIRNVISQVMFDNYFKQYAFISNGNLMTLLENTIENYETIWQLIEQKIYSIVNKNNYHILTMSQINNYQAFKSAINKLINNQAIIKKFYKRMSFGLIEYYYDIMDSLVVCLESKNFEDMSDIEAYIYQYHYVQLKRCHALFRWIRQEYQRNKQAQDDVNSRNITPGTKYNRILDYKIELLKTTGDVNSVFLEFQGLRRYLDEYSAIAMDKVQLHLRINDFVSNSYNNELNTLSNGRDISYMLDTDPNSNEYKNRWDNKQLMFINQGNSNNLKINFDLLQKIYQFNNPSSPPRDFEAYYTATYRRMKNNQGIDFQRIYNTNVFPESDVISNYMSIAPNILNNKGTVIMTYGYSGVGKSASLFGRKMDLSRGVDKPSNGILQATLDQLTNVEIYFRVFEIYGLGTQYNYYWNPTENNNYQCYPDFYQCIIHHVLDTTDSTTLKTKDHLVFTNRHDMLAYIMDLQNPKNGTQFTINNKNDPNLSNKTTFFNTIGQMVKSTYSKITEDHYRNFTDFVDDIDRVRSDGIHIKKVFDHIVKQIKGTINNPISSRSILVYDFEINLDPGSSNPIFIPFLIYDLPGKEDISRTYVDTSITPAIQGSSIEKINLRRRVFKDIDPPSTTPGVHNKERKSTYVLNPLLIPVFDNNIQIITDILGEISSKNTMISRLDVNFEATIVTDILNFVVDNFGVDNKGENVPSVQYPMNSFYKNPGGITTLVQLLSDNELIDTYKSTRYADVLPLIIGKGILSVNIIAGNRTYNPNENIKEIKILIGVVIIGHLIKYRLFDVVVEIINRIVEGPGNPNQNDDGGWSVSKIYAFFEAYYINENVVGLLQYLITNVLNKSSNSSGILEQVSTINNNNIKDTISQSYRTANAYSIIKSQLRIYPKTPLPDDYNIKVNSNLLVSSDVLKTLEIKEFMDNNDIQPDGQFFTPKVTPITELARRMDNVISFENRSDYDNNRIFRSGSSNFNCYDSNDVNDKILINPRRAIFNTAPSTMTETNRPLLQDFIEPYEQKISFYYIFYVVSNSQSRNKAEEQVKLLNNSMPFIDKMDPVSKKKQCV.

The protein resides in the virion. This is an uncharacterized protein from Acanthamoeba polyphaga mimivirus (APMV).